We begin with the raw amino-acid sequence, 155 residues long: 17.6 kDa class I heat shock protein 1 (155 aa).

The region spanning 39 to 154 (SSSAIANARV…KAQVKSIDIS (116 aa)) is the sHSP domain.

The protein belongs to the small heat shock protein (HSP20) family. Forms oligomeric structures. Binds to AKR2A.

It localises to the cytoplasm. Its function is as follows. Possesses chaperone activity. This is 17.6 kDa class I heat shock protein 1 (HSP17.6A) from Arabidopsis thaliana (Mouse-ear cress).